The following is a 29-amino-acid chain: Serum amyloid P-component (29 aa).

The 24-residue stretch at leucine 6 to glutamate 29 folds into the Pentraxin (PTX) domain.

It belongs to the pentraxin family. As to quaternary structure, homopentamer. Pentraxin (or pentaxin) have a discoid arrangement of 5 non-covalently bound subunits. Ca(2+) serves as cofactor.

It localises to the secreted. This chain is Serum amyloid P-component, found in Hippoglossus hippoglossus (Atlantic halibut).